The sequence spans 293 residues: Phosphate-binding protein PstS 2 (293 aa).

The signal sequence occupies residues methionine 1–glycine 23. Residue cysteine 24 is the site of N-palmitoyl cysteine attachment. Cysteine 24 is lipidated: S-diacylglycerol cysteine.

The protein belongs to the PstS family. As to quaternary structure, the complex is composed of two ATP-binding proteins (PstB), two transmembrane proteins (PstC and PstA) and a solute-binding protein (PstS).

It is found in the cell membrane. Functionally, part of the ABC transporter complex PstSACB involved in phosphate import. The polypeptide is Phosphate-binding protein PstS 2 (pstS2) (Streptococcus agalactiae serotype III (strain NEM316)).